Reading from the N-terminus, the 392-residue chain is MLLMLTQWLQGLSPELSFLRVFQYLTLRAVMAALTALLIGLIAGPKVIRMLTSLKIGQPIRGYAMQTHLSKSGTPTMGGVLILGSIAISTLLWFDLSNRFVWIVLAVTLGFGAIGWVDDWRKVVNKDPEGMRSREKYFWQSVIGLLAALYLVFSISENSNTRVFELFITWVQSGFLMDLPPKAGLLVPFFKEVSYPLGVLGFVILTYLVIVGSSNAVNLTDGLDGLAIMPVIMVGASLGIFAYVTGNAGYAKYLLFPYIAGSGELLIFCAAMAGAGLAFLWFNTHPAQVFMGDVGALALGAALGTIAVIVRQEIVLAIMGGIFVVEALSVMLQVTWFKYTKRKYGEGRRLLKMAPLHHHFEKSGWKETQVVVRFWIITMLLCLVGLTTLKLR.

Transmembrane regions (helical) follow at residues 24–44 (YLTL…LIAG), 76–96 (TMGG…WFDL), 100–120 (FVWI…VDDW), 137–157 (YFWQ…SISE), 167–187 (FITW…GLLV), 193–213 (VSYP…IVGS), 225–245 (GLAI…AYVT), 262–282 (SGEL…FLWF), 289–309 (VFMG…IAVI), 314–334 (IVLA…MLQV), and 369–389 (QVVV…LTTL).

Belongs to the glycosyltransferase 4 family. MraY subfamily. Mg(2+) is required as a cofactor.

It is found in the cell inner membrane. The enzyme catalyses UDP-N-acetyl-alpha-D-muramoyl-L-alanyl-gamma-D-glutamyl-meso-2,6-diaminopimeloyl-D-alanyl-D-alanine + di-trans,octa-cis-undecaprenyl phosphate = di-trans,octa-cis-undecaprenyl diphospho-N-acetyl-alpha-D-muramoyl-L-alanyl-D-glutamyl-meso-2,6-diaminopimeloyl-D-alanyl-D-alanine + UMP. It functions in the pathway cell wall biogenesis; peptidoglycan biosynthesis. Functionally, catalyzes the initial step of the lipid cycle reactions in the biosynthesis of the cell wall peptidoglycan: transfers peptidoglycan precursor phospho-MurNAc-pentapeptide from UDP-MurNAc-pentapeptide onto the lipid carrier undecaprenyl phosphate, yielding undecaprenyl-pyrophosphoryl-MurNAc-pentapeptide, known as lipid I. This is Phospho-N-acetylmuramoyl-pentapeptide-transferase from Acidovorax ebreus (strain TPSY) (Diaphorobacter sp. (strain TPSY)).